A 415-amino-acid polypeptide reads, in one-letter code: Serine/threonine transporter SstT (415 aa).

8 consecutive transmembrane segments (helical) span residues isoleucine 23–alanine 43, leucine 47–valine 67, isoleucine 85–phenylalanine 105, alanine 144–leucine 164, alanine 181–valine 201, leucine 220–phenylalanine 240, isoleucine 293–leucine 313, and valine 333–isoleucine 353.

Belongs to the dicarboxylate/amino acid:cation symporter (DAACS) (TC 2.A.23) family.

The protein localises to the cell inner membrane. It catalyses the reaction L-serine(in) + Na(+)(in) = L-serine(out) + Na(+)(out). The enzyme catalyses L-threonine(in) + Na(+)(in) = L-threonine(out) + Na(+)(out). Functionally, involved in the import of serine and threonine into the cell, with the concomitant import of sodium (symport system). This Klebsiella pneumoniae (strain 342) protein is Serine/threonine transporter SstT.